Consider the following 74-residue polypeptide: Protein A30 homolog (74 aa).

Belongs to the chordopoxvirinae A30 family. Interacts with protein G7; the interaction stabilizes both proteins. Post-translationally, phosphorylated by viral F10 kinase.

In terms of biological role, required for the association between the dense viroplasm and the viral membranes to form the mature virion (MV). This is Protein A30 homolog from Fowlpox virus (strain NVSL) (FPV).